Consider the following 403-residue polypeptide: Na(+)-translocating NADH-quinone reductase subunit B (403 aa).

3 helical membrane passes run 56–76 (IMIMVWAATFPAMFYGMYNIG), 114–134 (LAMFLYGACFFLPIYAVTFIV), and 165–185 (LPATIPLWQVALGITFGVVIA). At threonine 231 the chain carries FMN phosphoryl threonine. Helical transmembrane passes span 260-280 (GSVGEVSSLAILLGGLFIIYM), 287-307 (IVLGVLLGGAVFSTLLNVIGS), 312-332 (MFAMPWYWHVVTGGFAFGMFF), 348-368 (WAYGFLIGLMCVLIRVLNPAF), and 371-391 (GMMLAILFANLWAPLFDYFVA).

It belongs to the NqrB/RnfD family. In terms of assembly, composed of six subunits; NqrA, NqrB, NqrC, NqrD, NqrE and NqrF. The cofactor is FMN.

The protein localises to the cell inner membrane. The catalysed reaction is a ubiquinone + n Na(+)(in) + NADH + H(+) = a ubiquinol + n Na(+)(out) + NAD(+). NQR complex catalyzes the reduction of ubiquinone-1 to ubiquinol by two successive reactions, coupled with the transport of Na(+) ions from the cytoplasm to the periplasm. NqrA to NqrE are probably involved in the second step, the conversion of ubisemiquinone to ubiquinol. The sequence is that of Na(+)-translocating NADH-quinone reductase subunit B from Pseudoalteromonas atlantica (strain T6c / ATCC BAA-1087).